The following is a 140-amino-acid chain: Organic hydroperoxide resistance protein-like (140 aa).

Belongs to the OsmC/Ohr family.

In Mycoplasma pneumoniae (strain ATCC 29342 / M129 / Subtype 1) (Mycoplasmoides pneumoniae), this protein is Organic hydroperoxide resistance protein-like.